A 616-amino-acid polypeptide reads, in one-letter code: D-glutamate cyclase, mitochondrial (616 aa).

Residues 1–28 (MPFTLHLRSRLPSAIRSLILQKKPNIRN) constitute a mitochondrion transit peptide.

It belongs to the D-glutamate cyclase family.

Its subcellular location is the mitochondrion matrix. The catalysed reaction is D-glutamate = 5-oxo-D-proline + H2O. Functionally, D-glutamate cyclase that converts D-glutamate to 5-oxo-D-proline. The protein is D-glutamate cyclase, mitochondrial of Homo sapiens (Human).